The following is a 254-amino-acid chain: MRILVTNDDGIFAEGIYVLAKSLQDVGEVIVVAPNTERSAVGHGITMHHPLRMAGVRFFDTSIEAYSVNGTPADCIKIAIEVLLKDRKPTVVVSGINNGPNLGTDVLYSGTVSAAVEAAILDLPSIAVSMATSKIDQYNHAAEFICKLLSNTLHIEELSDTIINVNYPTIAYSEIKGVKVTNLGIRKYENAFIERLDPRGNAYYWISGKAMELAQDHESDVQAINDNYISITPIHFDLTHFKSFKKLKNLNLEK.

A divalent metal cation is bound by residues aspartate 8, aspartate 9, serine 39, and asparagine 97.

The protein belongs to the SurE nucleotidase family. The cofactor is a divalent metal cation.

It is found in the cytoplasm. The enzyme catalyses a ribonucleoside 5'-phosphate + H2O = a ribonucleoside + phosphate. Its function is as follows. Nucleotidase that shows phosphatase activity on nucleoside 5'-monophosphates. This chain is 5'-nucleotidase SurE, found in Alkaliphilus metalliredigens (strain QYMF).